The following is a 427-amino-acid chain: Trigger factor (427 aa).

Residues 163-248 (GDIVVIDFAG…LKEIKRKELA (86 aa)) form the PPIase FKBP-type domain.

This sequence belongs to the FKBP-type PPIase family. Tig subfamily.

Its subcellular location is the cytoplasm. It catalyses the reaction [protein]-peptidylproline (omega=180) = [protein]-peptidylproline (omega=0). Involved in protein export. Acts as a chaperone by maintaining the newly synthesized protein in an open conformation. Functions as a peptidyl-prolyl cis-trans isomerase. The sequence is that of Trigger factor from Carboxydothermus hydrogenoformans (strain ATCC BAA-161 / DSM 6008 / Z-2901).